The sequence spans 514 residues: Cardiolipin synthase 2 (514 aa).

3 helical membrane passes run 7 to 27 (LIFF…FIDV), 41 to 61 (ILGI…CVIF), and 71 to 91 (LTWL…YLLF). 2 consecutive PLD phosphodiesterase domains span residues 249 to 276 (INYR…GDEY) and 427 to 454 (EKGF…DMRS). Active-site residues include H254, K256, D261, H432, K434, and D439.

It belongs to the phospholipase D family. Cardiolipin synthase subfamily.

The protein localises to the cell membrane. The enzyme catalyses 2 a 1,2-diacyl-sn-glycero-3-phospho-(1'-sn-glycerol) = a cardiolipin + glycerol. In terms of biological role, catalyzes the reversible phosphatidyl group transfer from one phosphatidylglycerol molecule to another to form cardiolipin (CL) (diphosphatidylglycerol) and glycerol. In Bacillus anthracis, this protein is Cardiolipin synthase 2 (cls2).